The following is a 160-amino-acid chain: Phosphopantetheine adenylyltransferase (160 aa).

Position 10 (serine 10) interacts with substrate. ATP is bound by residues 10–11 (SF) and histidine 18. Substrate-binding residues include lysine 42, threonine 74, and arginine 88. ATP contacts are provided by residues 89 to 91 (GLR), glutamate 99, and 124 to 130 (FYYISSR).

The protein belongs to the bacterial CoaD family. In terms of assembly, homohexamer. Mg(2+) serves as cofactor.

The protein resides in the cytoplasm. It carries out the reaction (R)-4'-phosphopantetheine + ATP + H(+) = 3'-dephospho-CoA + diphosphate. The protein operates within cofactor biosynthesis; coenzyme A biosynthesis; CoA from (R)-pantothenate: step 4/5. Reversibly transfers an adenylyl group from ATP to 4'-phosphopantetheine, yielding dephospho-CoA (dPCoA) and pyrophosphate. The chain is Phosphopantetheine adenylyltransferase from Bdellovibrio bacteriovorus (strain ATCC 15356 / DSM 50701 / NCIMB 9529 / HD100).